The primary structure comprises 138 residues: CLAVATA3/ESR (CLE)-related protein 2 (138 aa).

Positions 1 to 22 are cleaved as a signal peptide; that stretch reads MPNIFKILLIVLLAVVSFRLSA. A required for secretion from the host cytoplasm to the host apoplasm region spans residues 23–90; that stretch reads STGDKKTAND…VPSHVTNRSM (68 aa). Residues N37, N87, and N123 are each glycosylated (N-linked (GlcNAc...) asparagine). Disordered stretches follow at residues 66–97 and 116–138; these read AIGR…PPPV and LAEK…PHHH. The short motif at 127–138 is the CLE element; sequence RLSPSGPDPHHH.

This sequence belongs to the CLV3/ESR signal peptide family. As to expression, highly expressed exclusively within the dorsal esophageal gland cell during syncytium formation in host plants (at protein level).

Its subcellular location is the secreted. It localises to the host cytoplasm. The protein localises to the host extracellular space. It is found in the extracellular space. The protein resides in the apoplast. Its function is as follows. Mimics host plant CLE extracellular signal peptides that regulate cell fate. May play a role in the differentiation or division of feeding cells (syncytia) induced in plant roots during infection. This chain is CLAVATA3/ESR (CLE)-related protein 2 (CLE2), found in Heterodera glycines (Soybean cyst nematode worm).